The sequence spans 180 residues: Major urinary protein 17 (180 aa).

The signal sequence occupies residues 1-18 (MKMLLLLCLGLTLVCVHA). C82 and C175 form a disulfide bridge.

This sequence belongs to the calycin superfamily. Lipocalin family. As to expression, because of their involvement in the coordination of social behavior, Mup proteins are thought to exhibit variable expression depending upon gender, age and status of the studied individuals. Expression may also be strain-specific: in strains C57BL/6J and 129S7, transcriptional support is lacking for Mup17.

The protein localises to the secreted. Functionally, major urinary proteins (Mups) bind pheromones, thus stabilize them and allow slow release into the air from urine marks. May protect pheromones from oxidation. May also act as pheromones themselves. In this context, they play a role in the regulation of social behaviors, such as aggression, mating, pup-suckling, territory establishment and dominance. In Mus musculus (Mouse), this protein is Major urinary protein 17 (Mup17).